The primary structure comprises 463 residues: Exodeoxyribonuclease 7 large subunit (463 aa).

The protein belongs to the XseA family. Heterooligomer composed of large and small subunits.

It is found in the cytoplasm. It carries out the reaction Exonucleolytic cleavage in either 5'- to 3'- or 3'- to 5'-direction to yield nucleoside 5'-phosphates.. Bidirectionally degrades single-stranded DNA into large acid-insoluble oligonucleotides, which are then degraded further into small acid-soluble oligonucleotides. This is Exodeoxyribonuclease 7 large subunit from Bordetella pertussis (strain Tohama I / ATCC BAA-589 / NCTC 13251).